A 312-amino-acid chain; its full sequence is sn-1-specific diacylglycerol lipase ABHD11 (312 aa).

A mitochondrion-targeting transit peptide spans Met-1–His-14. An AB hydrolase-1 domain is found at Pro-62–Lys-297. Catalysis depends on charge relay system residues Ser-136, Glu-232, and His-291.

This sequence belongs to the AB hydrolase superfamily. Post-translationally, phosphorylated.

The protein localises to the mitochondrion. It is found in the mitochondrion matrix. It carries out the reaction 1-octadecanoyl-2-(5Z,8Z,11Z,14Z-eicosatetraenoyl)-sn-glycerol + H2O = 2-(5Z,8Z,11Z,14Z-eicosatetraenoyl)-glycerol + octadecanoate + H(+). The enzyme catalyses a 1,2-diacyl-sn-glycerol + H2O = a 2-acylglycerol + a fatty acid + H(+). The catalysed reaction is a 1,3-diacyl-sn-glycerol + H2O = a 1-acyl-sn-glycerol + a fatty acid + H(+). It catalyses the reaction 1-octadecanoyl-2-(9Z-octadecenoyl)-sn-glycerol + H2O = 2-(9Z-octadecenoyl)-glycerol + octadecanoate + H(+). It carries out the reaction 1-octadecanoyl-2-(4Z,7Z,10Z,13Z,16Z,19Z-docosahexaenoyl)-sn-glycerol + H2O = 2-(4Z,7Z,10Z,13Z,16Z,19Z-docosahexaenoyl)-glycerol + octadecanoate + H(+). The enzyme catalyses 1,2-didecanoylglycerol + H2O = decanoylglycerol + decanoate + H(+). In terms of biological role, catalyzes the hydrolysis of diacylglycerol in vitro and may function as a key regulator in lipid metabolism, namely by regulating the intracellular levels of diacylglycerol. 1,2-diacyl-sn-glycerols are the preferred substrate over 1,3-diacyl-sn-glycerols. The enzyme hydrolyzes stearate in preference to palmitate from the sn-1 position of 1,2-diacyl-sn-glycerols. The chain is sn-1-specific diacylglycerol lipase ABHD11 from Xenopus laevis (African clawed frog).